Consider the following 164-residue polypeptide: Phosphopantetheine adenylyltransferase (164 aa).

Residue serine 9 coordinates substrate. ATP-binding positions include 9 to 10 (SF) and histidine 17. Substrate is bound by residues lysine 41, valine 78, and arginine 92. Residues 93–95 (GLR), glutamate 103, and 128–134 (VRTITAT) each bind ATP.

It belongs to the bacterial CoaD family. Homohexamer. It depends on Mg(2+) as a cofactor.

It is found in the cytoplasm. It catalyses the reaction (R)-4'-phosphopantetheine + ATP + H(+) = 3'-dephospho-CoA + diphosphate. The protein operates within cofactor biosynthesis; coenzyme A biosynthesis; CoA from (R)-pantothenate: step 4/5. Its function is as follows. Reversibly transfers an adenylyl group from ATP to 4'-phosphopantetheine, yielding dephospho-CoA (dPCoA) and pyrophosphate. This is Phosphopantetheine adenylyltransferase from Brucella abortus (strain 2308).